The primary structure comprises 381 residues: Cytochrome b (381 aa).

The next 4 membrane-spanning stretches (helical) occupy residues 34-54, 78-99, 114-134, and 179-199; these read FGSL…FLAM, WLIR…YLHI, WNIG…GYVL, and FFAF…IHLL. Residues His84 and His98 each contribute to the heme b site. Residues His183 and His197 each contribute to the heme b site. Residue His202 coordinates a ubiquinone. Transmembrane regions (helical) follow at residues 227 to 247, 289 to 309, 321 to 341, and 348 to 368; these read YKDL…ALFM, LGGV…PLLH, LTQI…WIGG, and FITV…IIMP.

It belongs to the cytochrome b family. In terms of assembly, the cytochrome bc1 complex contains 3 respiratory subunits (MT-CYB, CYC1 and UQCRFS1), 2 core proteins (UQCRC1 and UQCRC2) and probably 6 low-molecular weight proteins. The cofactor is heme b.

It localises to the mitochondrion inner membrane. In terms of biological role, component of the ubiquinol-cytochrome c reductase complex (complex III or cytochrome b-c1 complex) that is part of the mitochondrial respiratory chain. The b-c1 complex mediates electron transfer from ubiquinol to cytochrome c. Contributes to the generation of a proton gradient across the mitochondrial membrane that is then used for ATP synthesis. The sequence is that of Cytochrome b (mt-cyb) from Sphyrna lewini (Scalloped hammerhead shark).